Reading from the N-terminus, the 506-residue chain is Acrylate reductase flavoprotein subunit (506 aa).

Residues 1–30 constitute a signal peptide (tat-type signal); the sequence is MSNKDLLGRRNFIKGMGAAAGVAMAAPALA. Positions 54, 74, 82, 87, and 88 each coordinate FAD. Arg-333 acts as the Proton donor in catalysis. Residues Glu-473 and Ile-489 each coordinate FAD.

The protein belongs to the FAD-dependent oxidoreductase 2 family. FRD/SDH subfamily. As to quaternary structure, the ArdAB flavocytochrome c is composed of a FAD-containing subunit (ArdA) and a heme c-containing subunit (ArdB). FAD is required as a cofactor. Predicted to be exported by the Tat system. The position of the signal peptide cleavage has not been experimentally proven.

It is found in the periplasm. With respect to regulation, methacrylate acts as a competitive inhibitor of the acrylate reductase activity and suppresses the reductase activity in dose-dependent manner. Functionally, FAD-containing subunit of the ArdAB flavocytochrome c, which catalyzes the reduction of acrylate to propanoate and supports dimethylsulfoniopropionate-dependent anaerobic respiration. In vitro, can use the artificial electron donor methyl viologen. The natural electron donor is probably a low-potential cytochrome c. Also shows weak activity toward methacrylate in vitro (at a 22-fold lower rate) but cannot use other tested 2-enoates, including crotonic, fumaric, sorbic, urocanic, cinnamic, p-coumaric, caffeic or ferulic acids. The protein catalyzes a unidirectional reaction and cannot oxidize propanoate with phenazine metasulfate and dichlorophenolindophenol as electron acceptors. The protein is Acrylate reductase flavoprotein subunit of Shewanella woodyi (strain ATCC 51908 / MS32).